Here is a 337-residue protein sequence, read N- to C-terminus: Glyceraldehyde-3-phosphate dehydrogenase (337 aa).

NADP(+) is bound by residues 11–12 (TV), 34–35 (TR), and G110. Residue 139 to 141 (SCN) participates in D-glyceraldehyde 3-phosphate binding. The active-site Nucleophile is C140. D171 provides a ligand contact to NADP(+). D-glyceraldehyde 3-phosphate is bound at residue 194–195 (HG). Residue Q300 coordinates NADP(+).

Belongs to the glyceraldehyde-3-phosphate dehydrogenase family. As to quaternary structure, homotetramer.

It is found in the cytoplasm. It carries out the reaction D-glyceraldehyde 3-phosphate + phosphate + NADP(+) = (2R)-3-phospho-glyceroyl phosphate + NADPH + H(+). It catalyses the reaction D-glyceraldehyde 3-phosphate + phosphate + NAD(+) = (2R)-3-phospho-glyceroyl phosphate + NADH + H(+). It functions in the pathway carbohydrate degradation; glycolysis; pyruvate from D-glyceraldehyde 3-phosphate: step 1/5. Its function is as follows. Exhibits a dual-cofactor specificity, with a marked preference for NADP(+) over NAD(+). This Methanothermus fervidus protein is Glyceraldehyde-3-phosphate dehydrogenase (gap).